The primary structure comprises 601 residues: Bifunctional protein GlmU (601 aa).

Residues 1 to 375 are pyrophosphorylase; sequence MKSDLAIVIL…SELLLGVNNR (375 aa). UDP-N-acetyl-alpha-D-glucosamine is bound by residues 10–13, lysine 24, glutamine 75, and 81–82; these read LAAG and GT. Aspartate 165 provides a ligand contact to Mg(2+). Residues glycine 201, glutamate 216, asparagine 230, and asparagine 373 each coordinate UDP-N-acetyl-alpha-D-glucosamine. Mg(2+) is bound at residue asparagine 373. The interval 376–396 is linker; sequence VQLAKTEKILNDQIIKRWQLY. Residues 397-601 form an N-acetyltransferase region; that stretch reads GVTIKSPETT…PKWAENRGDG (205 aa). Residues arginine 478 and lysine 496 each coordinate UDP-N-acetyl-alpha-D-glucosamine. Residue histidine 508 is the Proton acceptor of the active site. Residues tyrosine 511 and asparagine 522 each coordinate UDP-N-acetyl-alpha-D-glucosamine. Acetyl-CoA-binding positions include alanine 525, 531-532, and alanine 568; that span reads NY.

In the N-terminal section; belongs to the N-acetylglucosamine-1-phosphate uridyltransferase family. This sequence in the C-terminal section; belongs to the transferase hexapeptide repeat family. Homotrimer. Mg(2+) is required as a cofactor.

It localises to the cytoplasm. The enzyme catalyses alpha-D-glucosamine 1-phosphate + acetyl-CoA = N-acetyl-alpha-D-glucosamine 1-phosphate + CoA + H(+). It catalyses the reaction N-acetyl-alpha-D-glucosamine 1-phosphate + UTP + H(+) = UDP-N-acetyl-alpha-D-glucosamine + diphosphate. It participates in nucleotide-sugar biosynthesis; UDP-N-acetyl-alpha-D-glucosamine biosynthesis; N-acetyl-alpha-D-glucosamine 1-phosphate from alpha-D-glucosamine 6-phosphate (route II): step 2/2. It functions in the pathway nucleotide-sugar biosynthesis; UDP-N-acetyl-alpha-D-glucosamine biosynthesis; UDP-N-acetyl-alpha-D-glucosamine from N-acetyl-alpha-D-glucosamine 1-phosphate: step 1/1. Its pathway is bacterial outer membrane biogenesis; LPS lipid A biosynthesis. In terms of biological role, catalyzes the last two sequential reactions in the de novo biosynthetic pathway for UDP-N-acetylglucosamine (UDP-GlcNAc). The C-terminal domain catalyzes the transfer of acetyl group from acetyl coenzyme A to glucosamine-1-phosphate (GlcN-1-P) to produce N-acetylglucosamine-1-phosphate (GlcNAc-1-P), which is converted into UDP-GlcNAc by the transfer of uridine 5-monophosphate (from uridine 5-triphosphate), a reaction catalyzed by the N-terminal domain. This Tropheryma whipplei (strain TW08/27) (Whipple's bacillus) protein is Bifunctional protein GlmU.